We begin with the raw amino-acid sequence, 182 residues long: T-cell surface glycoprotein CD3 gamma chain (182 aa).

A signal peptide spans 1 to 22 (MEQGKGLAVLILAIILLQGTLA). The Extracellular segment spans residues 23-116 (QSIKGNHLVK…CIELNAATIS (94 aa)). The region spanning 37–94 (QEDGSVLLTCDAEAKNITWFKDGKMIGFLTEDKKKWNLGSNAKDPRGMYQCKGSQNKS) is the Ig-like domain. Cys-46 and Cys-87 are joined by a disulfide. N-linked (GlcNAc...) asparagine glycans are attached at residues Asn-52 and Asn-92. Residues 117–137 (GFLFAEIVSIFVLAVGVYFIA) form a helical membrane-spanning segment. The Cytoplasmic portion of the chain corresponds to 138–182 (GQDGVRQSRASDKQTLLPNDQLYQPLKDREDDQYSHLQGNQLRRN). Ser-145 is subject to Phosphoserine. Ser-148 is modified (phosphoserine; by PKC). Residues 149–177 (DKQTLLPNDQLYQPLKDREDDQYSHLQGN) form the ITAM domain. Positions 153-154 (LL) match the Di-leucine motif motif.

In terms of assembly, the TCR-CD3 complex is composed of a CD3D/CD3E and a CD3G/CD3E heterodimers that preferentially associate with TCRalpha and TCRbeta, respectively, to form TCRalpha/CD3E/CD3G and TCRbeta/CD3G/CD3E trimers. In turn, the hexamer interacts with CD3Z homodimer to form the TCR-CD3 complex. Alternatively, TCRalpha and TCRbeta can be replaced by TCRgamma and TCRdelta. Post-translationally, phosphorylated on Tyr residues after T-cell receptor triggering by LCK in association with CD4/CD8. Phosphorylated also by PKC; leading to the TCR complex down-regulation. In terms of processing, phosphorylated on Tyr residues after T-cell receptor triggering by LCK in association with CD4/CD8.

It localises to the cell membrane. Functionally, part of the TCR-CD3 complex present on T-lymphocyte cell surface that plays an essential role in adaptive immune response. When antigen presenting cells (APCs) activate T-cell receptor (TCR), TCR-mediated signals are transmitted across the cell membrane by the CD3 chains CD3D, CD3E, CD3G and CD3Z. All CD3 chains contain immunoreceptor tyrosine-based activation motifs (ITAMs) in their cytoplasmic domain. Upon TCR engagement, these motifs become phosphorylated by Src family protein tyrosine kinases LCK and FYN, resulting in the activation of downstream signaling pathways. In addition to this role of signal transduction in T-cell activation, CD3G plays an essential role in the dynamic regulation of TCR expression at the cell surface. Indeed, constitutive TCR cycling is dependent on the di-leucine-based (diL) receptor-sorting motif present in CD3G. In Homo sapiens (Human), this protein is T-cell surface glycoprotein CD3 gamma chain (CD3G).